The following is a 450-amino-acid chain: ATP-dependent protease ATPase subunit HslU (450 aa).

Residues Ile18 and 60–65 (GVGKTE) contribute to the ATP site. Residues 140–151 (KTSSSGWAQQQE) are compositionally biased toward polar residues. The tract at residues 140–162 (KTSSSGWAQQQEETPENDDQRGT) is disordered. Residues Asp263, Glu328, and Arg400 each contribute to the ATP site.

It belongs to the ClpX chaperone family. HslU subfamily. In terms of assembly, a double ring-shaped homohexamer of HslV is capped on each side by a ring-shaped HslU homohexamer. The assembly of the HslU/HslV complex is dependent on binding of ATP.

The protein localises to the cytoplasm. Functionally, ATPase subunit of a proteasome-like degradation complex; this subunit has chaperone activity. The binding of ATP and its subsequent hydrolysis by HslU are essential for unfolding of protein substrates subsequently hydrolyzed by HslV. HslU recognizes the N-terminal part of its protein substrates and unfolds these before they are guided to HslV for hydrolysis. The chain is ATP-dependent protease ATPase subunit HslU from Idiomarina loihiensis (strain ATCC BAA-735 / DSM 15497 / L2-TR).